Consider the following 162-residue polypeptide: NADPH-dependent 7-cyano-7-deazaguanine reductase (162 aa).

The active-site Thioimide intermediate is the cysteine 53. The active-site Proton donor is the aspartate 60. Residues 75–77 and 94–95 contribute to the substrate site; these read VES and HE.

It belongs to the GTP cyclohydrolase I family. QueF type 1 subfamily.

Its subcellular location is the cytoplasm. It catalyses the reaction 7-aminomethyl-7-carbaguanine + 2 NADP(+) = 7-cyano-7-deazaguanine + 2 NADPH + 3 H(+). Its pathway is tRNA modification; tRNA-queuosine biosynthesis. Functionally, catalyzes the NADPH-dependent reduction of 7-cyano-7-deazaguanine (preQ0) to 7-aminomethyl-7-deazaguanine (preQ1). This Exiguobacterium sp. (strain ATCC BAA-1283 / AT1b) protein is NADPH-dependent 7-cyano-7-deazaguanine reductase.